The chain runs to 145 residues: 3-dehydroquinate dehydratase (145 aa).

Y22 serves as the catalytic Proton acceptor. Substrate-binding residues include N71, H77, and D84. H97 acts as the Proton donor in catalysis. Residues 98–99 (LS) and R108 contribute to the substrate site.

Belongs to the type-II 3-dehydroquinase family. In terms of assembly, homododecamer.

The catalysed reaction is 3-dehydroquinate = 3-dehydroshikimate + H2O. The protein operates within metabolic intermediate biosynthesis; chorismate biosynthesis; chorismate from D-erythrose 4-phosphate and phosphoenolpyruvate: step 3/7. Its function is as follows. Catalyzes a trans-dehydration via an enolate intermediate. The sequence is that of 3-dehydroquinate dehydratase from Francisella tularensis subsp. tularensis (strain WY96-3418).